The chain runs to 360 residues: DNA replication and repair protein RecF (360 aa).

30–37 lines the ATP pocket; the sequence is GHNGSGKT.

Belongs to the RecF family.

It localises to the cytoplasm. In terms of biological role, the RecF protein is involved in DNA metabolism; it is required for DNA replication and normal SOS inducibility. RecF binds preferentially to single-stranded, linear DNA. It also seems to bind ATP. The chain is DNA replication and repair protein RecF from Shewanella sediminis (strain HAW-EB3).